Consider the following 214-residue polypeptide: Osteoclast-stimulating factor 1 (214 aa).

At Ser-2 the chain carries N-acetylserine. The SH3 domain occupies Gly-12–Glu-71. ANK repeat units follow at residues Ser-72–Gly-101, Ala-105–Gln-135, and Leu-139–Leu-168. A Phosphothreonine modification is found at Thr-200. A phosphoserine mark is found at Ser-202 and Ser-213.

Interacts with SRC and SMN1. Interacts with FASLG.

The protein localises to the cytoplasm. Induces bone resorption, acting probably through a signaling cascade which results in the secretion of factor(s) enhancing osteoclast formation and activity. In Rattus norvegicus (Rat), this protein is Osteoclast-stimulating factor 1 (Ostf1).